The primary structure comprises 317 residues: Methionyl-tRNA formyltransferase (317 aa).

Position 112 to 115 (112 to 115) interacts with (6S)-5,6,7,8-tetrahydrofolate; sequence SLLP.

Belongs to the Fmt family.

It carries out the reaction L-methionyl-tRNA(fMet) + (6R)-10-formyltetrahydrofolate = N-formyl-L-methionyl-tRNA(fMet) + (6S)-5,6,7,8-tetrahydrofolate + H(+). Functionally, attaches a formyl group to the free amino group of methionyl-tRNA(fMet). The formyl group appears to play a dual role in the initiator identity of N-formylmethionyl-tRNA by promoting its recognition by IF2 and preventing the misappropriation of this tRNA by the elongation apparatus. This Mesorhizobium japonicum (strain LMG 29417 / CECT 9101 / MAFF 303099) (Mesorhizobium loti (strain MAFF 303099)) protein is Methionyl-tRNA formyltransferase.